Here is a 614-residue protein sequence, read N- to C-terminus: GPI transamidase component GAA1 (614 aa).

Topologically, residues 1 to 19 (MALLEKLHRRIVDMGLVPR) are cytoplasmic. A helical transmembrane segment spans residues 20–40 (IIALLPVISMLCALFGFISIA). The Lumenal segment spans residues 41 to 356 (ILPMDGQYRR…APRQFVSISS (316 aa)). N-linked (GlcNAc...) asparagine glycosylation occurs at asparagine 87. The helical transmembrane segment at 357–377 (YLPSAVALSIAFAISSLNAFI) threads the bilayer. The Cytoplasmic segment spans residues 378-394 (NNAYANISLFSEYNLVA). A helical membrane pass occupies residues 395–415 (LLVWFVSLVISFVVSQAFLLI). The Lumenal portion of the chain corresponds to 416–464 (PSSGLLMTISMASCFLPLILSRKIHISEPLSYRLKNVAFLYFSLVSTSL). Residues 465–485 (LMINFAMALLIGTLAFPMTFV) traverse the membrane as a helical segment. Over 486-535 (KTIVESSSEHEVTTQSSNPIKTEPKDEIELVENHMDTTPATPQQQKQKLK) the chain is Cytoplasmic. Residues 536–556 (NLVLLILTNPFISITLFGLFF) form a helical membrane-spanning segment. At 557–577 (DDEFHGFDIINKLVSAWLDLK) the chain is on the lumenal side. The helical transmembrane segment at 578–598 (CWSWFVLCIGWLPCWLLILAS) threads the bilayer. The Cytoplasmic portion of the chain corresponds to 599–614 (SFESKSVVVRSKEKQS). Positions 610–614 (KEKQS) match the Prevents secretion from ER motif.

Forms a complex with CDC91, GPI17, GPI16 and GPI8.

The protein localises to the endoplasmic reticulum membrane. It functions in the pathway glycolipid biosynthesis; glycosylphosphatidylinositol-anchor biosynthesis. Functionally, component of the GPI transamidase complex. Required for a terminal step of GPI anchor attachment onto proteins. Affects endocytosis. This chain is GPI transamidase component GAA1 (GAA1), found in Saccharomyces cerevisiae (strain ATCC 204508 / S288c) (Baker's yeast).